We begin with the raw amino-acid sequence, 87 residues long: Selenoprotein W (87 aa).

Positions 10–13 (CGAU) form a cross-link, cysteinyl-selenocysteine (Cys-Sec); redox-active. Sec-13 is a non-standard amino acid (selenocysteine). At Cys-37 the chain carries S-glutathionyl cysteine.

This sequence belongs to the SelWTH family. Selenoprotein W subfamily. Interacts with DPYSL2, PRDX1, YWHAB, YWHAG, HSP70 and HSP90. Highest levels detected in skeletal muscle, tongue, heart and brain. Expressed at significantly higher levels in female skeletal muscle than in male and at slightly higher levels in female cardiac muscle than in male (at protein level). Also detected at low levels in liver.

It is found in the cytoplasm. Functionally, plays a role as a glutathione (GSH)-dependent antioxidant. May be involved in a redox-related process. May play a role in the myopathies of selenium deficiency. The protein is Selenoprotein W of Macaca mulatta (Rhesus macaque).